We begin with the raw amino-acid sequence, 589 residues long: Aspartate--tRNA ligase (589 aa).

Glu174 provides a ligand contact to L-aspartate. Positions 198–201 (QLFK) are aspartate. Position 220 (Arg220) interacts with L-aspartate. ATP is bound by residues 220-222 (RDE) and Gln229. His448 contributes to the L-aspartate binding site. Glu483 provides a ligand contact to ATP. L-aspartate is bound at residue Arg490. 535–538 (GIDR) is a binding site for ATP.

This sequence belongs to the class-II aminoacyl-tRNA synthetase family. Type 1 subfamily. As to quaternary structure, homodimer.

It is found in the cytoplasm. The enzyme catalyses tRNA(Asp) + L-aspartate + ATP = L-aspartyl-tRNA(Asp) + AMP + diphosphate. Its function is as follows. Catalyzes the attachment of L-aspartate to tRNA(Asp) in a two-step reaction: L-aspartate is first activated by ATP to form Asp-AMP and then transferred to the acceptor end of tRNA(Asp). The polypeptide is Aspartate--tRNA ligase (Xylella fastidiosa (strain M23)).